The sequence spans 82 residues: Putative antitoxin VapB23 (82 aa).

Functionally, putative antitoxin component of a possible type II toxin-antitoxin (TA) system. The cognate toxin is VapC23. The polypeptide is Putative antitoxin VapB23 (vapB23) (Mycobacterium tuberculosis (strain ATCC 25618 / H37Rv)).